The sequence spans 252 residues: 29 kDa protein (252 aa).

A disordered region spans residues 222–252; the sequence is YDGPYRPATTRPKSLLSSEDVKRASNKKNSS.

This Beta vulgaris (Sugar beet) protein is 29 kDa protein.